The primary structure comprises 211 residues: High frequency lysogenization protein HflD homolog (211 aa).

The protein belongs to the HflD family.

Its subcellular location is the cytoplasm. It localises to the cell membrane. This is High frequency lysogenization protein HflD homolog from Buchnera aphidicola subsp. Acyrthosiphon pisum (strain 5A).